A 124-amino-acid polypeptide reads, in one-letter code: Late histone H2A.2.1 (124 aa).

Positions 1-18 are enriched in basic residues; sequence MSGRGKGAKAKSKAKSRS. The segment at 1–21 is disordered; sequence MSGRGKGAKAKSKAKSRSSRA. Ser-2 carries the N-acetylserine modification. Ser-2 is modified (phosphoserine). An N5-methylglutamine modification is found at Gln-104. Lys-119 participates in a covalent cross-link: Glycyl lysine isopeptide (Lys-Gly) (interchain with G-Cter in ubiquitin).

The protein belongs to the histone H2A family. In terms of assembly, the nucleosome is a histone octamer containing two molecules each of H2A, H2B, H3 and H4 assembled in one H3-H4 heterotetramer and two H2A-H2B heterodimers. The octamer wraps approximately 147 bp of DNA. In terms of processing, monoubiquitination of Lys-119 gives a specific tag for epigenetic transcriptional repression. Post-translationally, phosphorylation of Ser-2 directly represses transcription.

The protein resides in the nucleus. The protein localises to the chromosome. Functionally, core component of nucleosome. Nucleosomes wrap and compact DNA into chromatin, limiting DNA accessibility to the cellular machineries which require DNA as a template. Histones thereby play a central role in transcription regulation, DNA repair, DNA replication and chromosomal stability. DNA accessibility is regulated via a complex set of post-translational modifications of histones, also called histone code, and nucleosome remodeling. The polypeptide is Late histone H2A.2.1 (Psammechinus miliaris (Green sea urchin)).